Here is a 315-residue protein sequence, read N- to C-terminus: Annexin Gh1 (315 aa).

Annexin repeat units follow at residues Pro-10–Leu-81, Asp-82–Ser-153, Thr-165–Lys-236, and Tyr-240–Gly-311. Ca(2+)-binding residues include Phe-23, Gly-25, Gly-27, and Glu-67. Ca(2+)-binding residues include Ile-253, Arg-255, Gly-257, Val-295, Asp-297, Thr-298, and Glu-303.

It belongs to the annexin family. As to quaternary structure, monomer. Trimer. Oligomerization is calcium-independent. Disassembly of the oligomers seems to be required for calcium-binding.

The protein resides in the membrane. Binds to phospholipid vesicles in a calcium-dependent manner in vitro. Prefers phosphatidyl-serine containing membranes. May have a role in the membrane cytoskeleton scaffolding or exocytotic processes. May be involved in oxidative stress response. In Gossypium hirsutum (Upland cotton), this protein is Annexin Gh1.